The sequence spans 179 residues: Gut granule loss protein 3 (179 aa).

The segment at 40–59 (DLDSASSGVGSSTCTEEQES) is disordered. The segment covering 42–54 (DSASSGVGSSTCT) has biased composition (polar residues).

The polypeptide is Gut granule loss protein 3 (glo-3) (Caenorhabditis elegans).